The chain runs to 287 residues: Acetyl-coenzyme A carboxylase carboxyl transferase subunit beta (287 aa).

The region spanning 28-287 (LWKKCPKCEN…ILSLLTNKVA (260 aa)) is the CoA carboxyltransferase N-terminal domain. Zn(2+)-binding residues include Cys32, Cys35, Cys51, and Cys54. The segment at 32-54 (CPKCENVLYRPELEKNLDVCPKC) adopts a C4-type zinc-finger fold.

It belongs to the AccD/PCCB family. As to quaternary structure, acetyl-CoA carboxylase is a heterohexamer composed of biotin carboxyl carrier protein (AccB), biotin carboxylase (AccC) and two subunits each of ACCase subunit alpha (AccA) and ACCase subunit beta (AccD). Zn(2+) serves as cofactor.

The protein resides in the cytoplasm. The catalysed reaction is N(6)-carboxybiotinyl-L-lysyl-[protein] + acetyl-CoA = N(6)-biotinyl-L-lysyl-[protein] + malonyl-CoA. It participates in lipid metabolism; malonyl-CoA biosynthesis; malonyl-CoA from acetyl-CoA: step 1/1. In terms of biological role, component of the acetyl coenzyme A carboxylase (ACC) complex. Biotin carboxylase (BC) catalyzes the carboxylation of biotin on its carrier protein (BCCP) and then the CO(2) group is transferred by the transcarboxylase to acetyl-CoA to form malonyl-CoA. The polypeptide is Acetyl-coenzyme A carboxylase carboxyl transferase subunit beta (Marinomonas sp. (strain MWYL1)).